The chain runs to 340 residues: HTH-type transcriptional regulator VirS (340 aa).

Residues 236 to 334 form the HTH araC/xylS-type domain; it reads ERVVGLARRL…GMTPRQYRAY (99 aa). 2 DNA-binding regions (H-T-H motif) span residues 254-275 and 301-324; these read EAIA…AAEG and LSQI…RRWF.

Post-translationally, phosphorylated by PknK. Phosphorylation increases affinity for the mymA promoter.

Regulates the expression of the mymA operon. The protein is HTH-type transcriptional regulator VirS (virS) of Mycobacterium tuberculosis (strain CDC 1551 / Oshkosh).